A 95-amino-acid polypeptide reads, in one-letter code: Protein Vpr (95 aa).

The interval 1–42 (MERAPEDAGPQREPYNEWALELLEELKNEAVRHFPRIWLHGL) is homooligomerization. A phosphoserine; by host mark is found at serine 79, serine 93, and serine 95.

It belongs to the HIV-1 VPR protein family. In terms of assembly, homooligomer, may form homodimer. Interacts with p6-gag region of the Pr55 Gag precursor protein through a (Leu-X-X)4 motif near the C-terminus of the P6gag protein. Interacts with host UNG. May interact with host RAD23A/HHR23A. Interacts with host VPRBP/DCAF1, leading to hijack the CUL4A-RBX1-DDB1-DCAF1/VPRBP complex, mediating ubiquitination of host proteins such as TERT and ZGPAT and arrest of the cell cycle in G2 phase. Phosphorylated on several residues by host. These phosphorylations regulate VPR activity for the nuclear import of the HIV-1 pre-integration complex.

It localises to the virion. The protein resides in the host nucleus. Its subcellular location is the host extracellular space. In terms of biological role, during virus replication, may deplete host UNG protein, and incude G2-M cell cycle arrest. Acts by targeting specific host proteins for degradation by the 26S proteasome, through association with the cellular CUL4A-DDB1 E3 ligase complex by direct interaction with host VPRPB/DCAF-1. Cell cycle arrest reportedly occurs within hours of infection and is not blocked by antiviral agents, suggesting that it is initiated by the VPR carried into the virion. Additionally, VPR induces apoptosis in a cell cycle dependent manner suggesting that these two effects are mechanistically linked. Detected in the serum and cerebrospinal fluid of AIDS patient, VPR may also induce cell death to bystander cells. Functionally, during virus entry, plays a role in the transport of the viral pre-integration (PIC) complex to the host nucleus. This function is crucial for viral infection of non-dividing macrophages. May act directly at the nuclear pore complex, by binding nucleoporins phenylalanine-glycine (FG)-repeat regions. The protein is Protein Vpr of Homo sapiens (Human).